A 260-amino-acid polypeptide reads, in one-letter code: Flap endonuclease Xni (260 aa).

D109 lines the Mg(2+) pocket. The region spanning 165–259 is the 5'-3' exonuclease domain; that stretch reads VKPSQLADYW…DIRFTGPNKA (95 aa). L176, P185, V187, and V190 together coordinate K(+). Positions 189 to 194 are interaction with DNA; the sequence is GVGPKA.

This sequence belongs to the Xni family. Mg(2+) is required as a cofactor. K(+) serves as cofactor.

In terms of biological role, has flap endonuclease activity. During DNA replication, flap endonucleases cleave the 5'-overhanging flap structure that is generated by displacement synthesis when DNA polymerase encounters the 5'-end of a downstream Okazaki fragment. This Vibrio campbellii (strain ATCC BAA-1116) protein is Flap endonuclease Xni.